The following is a 729-amino-acid chain: Probable pre-mRNA-splicing factor ATP-dependent RNA helicase DEAH3 (729 aa).

In terms of domain architecture, Helicase ATP-binding spans 75–244 (LNTLNSNQTL…FSGAPLMKVP (170 aa)). Residue 88 to 95 (GETGSGKT) participates in ATP binding. The short motif at 191–194 (DEAH) is the DEAH box element. The region spanning 269-449 (TVVQIHMCEP…NTVLTLKKLG (181 aa)) is the Helicase C-terminal domain.

Belongs to the DEAD box helicase family. DEAH subfamily. PRP43 sub-subfamily.

It catalyses the reaction ATP + H2O = ADP + phosphate + H(+). May be involved in pre-mRNA splicing. This chain is Probable pre-mRNA-splicing factor ATP-dependent RNA helicase DEAH3, found in Arabidopsis thaliana (Mouse-ear cress).